Reading from the N-terminus, the 244-residue chain is Glutathione S-transferase theta-2 (244 aa).

Positions 2-82 constitute a GST N-terminal domain; it reads GLELYLDLLS…YLSSKYQVAD (81 aa). Glutathione is bound by residues 40 to 41, 53 to 54, 66 to 67, and 104 to 107; these read HL, KV, ES, and DNIR. The region spanning 88-230 is the GST C-terminal domain; that stretch reads DLQARAQVHE…AKKTLPVPPP (143 aa).

This sequence belongs to the GST superfamily. Theta family. As to quaternary structure, homodimer. In terms of tissue distribution, highest values found in liver followed by testis, adrenal gland, kidney, lung, brain and skeletal muscle. In liver, highest expression found in central vein limiting plate hepatocytes. In lung, expressed mainly in club cells of the bronchiolar epithelium and, at low levels, in type II alveolar cells.

The protein resides in the cytoplasm. It localises to the cytosol. Its subcellular location is the nucleus. The enzyme catalyses RX + glutathione = an S-substituted glutathione + a halide anion + H(+). Catalyzes the inactivation of reactive sulfate esters in carcinogenic arylmethanols. Highest activity towards ethacrynic acid and cumene hydroperoxide. The polypeptide is Glutathione S-transferase theta-2 (Gstt2) (Rattus norvegicus (Rat)).